The chain runs to 222 residues: CEACAM1-like protein UL7 (222 aa).

N-linked (GlcNAc...) asparagine; by host glycans are attached at residues Asn50, Asn56, Asn60, Asn71, Asn105, Asn109, Asn125, Asn132, Asn147, Asn164, Asn168, and Asn189. The chain crosses the membrane as a helical span at residues 193 to 213; sequence LALVGVVVFLVLIVVCIMGWW.

The protein belongs to the RL11 family. Highly glycosylated.

The protein resides in the secreted. It localises to the host cell membrane. Its function is as follows. Plays a role in modulating the host immune response and affecting host cytokine production. Structurally and functionally homolog of host CEACAM1, induces endothelial cell angiogenesis. The polypeptide is CEACAM1-like protein UL7 (UL7) (Homo sapiens (Human)).